The following is a 427-amino-acid chain: Gamma-glutamyl phosphate reductase (427 aa).

This sequence belongs to the gamma-glutamyl phosphate reductase family.

The protein localises to the cytoplasm. The enzyme catalyses L-glutamate 5-semialdehyde + phosphate + NADP(+) = L-glutamyl 5-phosphate + NADPH + H(+). It participates in amino-acid biosynthesis; L-proline biosynthesis; L-glutamate 5-semialdehyde from L-glutamate: step 2/2. Catalyzes the NADPH-dependent reduction of L-glutamate 5-phosphate into L-glutamate 5-semialdehyde and phosphate. The product spontaneously undergoes cyclization to form 1-pyrroline-5-carboxylate. The polypeptide is Gamma-glutamyl phosphate reductase (Brucella melitensis biotype 2 (strain ATCC 23457)).